Here is a 657-residue protein sequence, read N- to C-terminus: Histidine ammonia-lyase (657 aa).

Residues 253–255 constitute a cross-link (5-imidazolinone (Ala-Gly)); the sequence is ASG. The residue at position 254 (Ser254) is a 2,3-didehydroalanine (Ser). A Phosphothreonine modification is found at Thr396. Residue Ser635 is modified to Phosphoserine. Phosphothreonine is present on Thr637. The residue at position 648 (Ser648) is a Phosphoserine.

Belongs to the PAL/histidase family. Contains an active site 4-methylidene-imidazol-5-one (MIO), which is formed autocatalytically by cyclization and dehydration of residues Ala-Ser-Gly.

It carries out the reaction L-histidine = trans-urocanate + NH4(+). Its pathway is amino-acid degradation; L-histidine degradation into L-glutamate; N-formimidoyl-L-glutamate from L-histidine: step 1/3. This Bos taurus (Bovine) protein is Histidine ammonia-lyase (HAL).